Consider the following 310-residue polypeptide: Transaldolase (310 aa).

Lys-124 acts as the Schiff-base intermediate with substrate in catalysis.

Belongs to the transaldolase family. Type 1 subfamily. In terms of assembly, homodimer.

Its subcellular location is the cytoplasm. It carries out the reaction D-sedoheptulose 7-phosphate + D-glyceraldehyde 3-phosphate = D-erythrose 4-phosphate + beta-D-fructose 6-phosphate. Its pathway is carbohydrate degradation; pentose phosphate pathway; D-glyceraldehyde 3-phosphate and beta-D-fructose 6-phosphate from D-ribose 5-phosphate and D-xylulose 5-phosphate (non-oxidative stage): step 2/3. Transaldolase is important for the balance of metabolites in the pentose-phosphate pathway. The sequence is that of Transaldolase from Teredinibacter turnerae (strain ATCC 39867 / T7901).